The following is a 291-amino-acid chain: HTH-type transcriptional regulator CitR (291 aa).

The HTH lysR-type domain occupies 1–58 (MDFKWLHTFVTAAKYENFRKTAETLFLSQPTVTVHIKQLEKEISCKLFERKGRQIQLT). A DNA-binding region (H-T-H motif) is located at residues 18 to 37 (FRKTAETLFLSQPTVTVHIK).

Belongs to the LysR transcriptional regulatory family.

The protein resides in the cytoplasm. Its function is as follows. Negative regulatory protein for the citA gene for citrate synthase I. The polypeptide is HTH-type transcriptional regulator CitR (citR) (Bacillus subtilis (strain 168)).